We begin with the raw amino-acid sequence, 282 residues long: sn-glycerol-3-phosphate transport system permease protein UgpE (282 aa).

6 consecutive transmembrane segments (helical) span residues leucine 14–serine 34, isoleucine 86–phenylalanine 106, methionine 112–proline 132, valine 136–serine 156, isoleucine 201–leucine 221, and tryptophan 248–leucine 268. The ABC transmembrane type-1 domain maps to leucine 78–methionine 269.

This sequence belongs to the binding-protein-dependent transport system permease family. The complex is composed of two ATP-binding proteins (UgpC), two transmembrane proteins (UgpA and UgpE) and a solute-binding protein (UgpB).

Its subcellular location is the cell inner membrane. In terms of biological role, part of the ABC transporter complex UgpBAEC involved in sn-glycerol-3-phosphate (G3P) import. Probably responsible for the translocation of the substrate across the membrane. The polypeptide is sn-glycerol-3-phosphate transport system permease protein UgpE (ugpE) (Rhizobium meliloti (strain 1021) (Ensifer meliloti)).